We begin with the raw amino-acid sequence, 433 residues long: UDP-N-acetylglucosamine 1-carboxyvinyltransferase 1 (433 aa).

22 to 23 (KN) is a phosphoenolpyruvate binding site. Arg95 serves as a coordination point for UDP-N-acetyl-alpha-D-glucosamine. The active-site Proton donor is the Cys119. Position 119 is a 2-(S-cysteinyl)pyruvic acid O-phosphothioketal (Cys119). UDP-N-acetyl-alpha-D-glucosamine-binding positions include 124–128 (RPVDL), Asp307, and Val329.

It belongs to the EPSP synthase family. MurA subfamily.

The protein localises to the cytoplasm. It carries out the reaction phosphoenolpyruvate + UDP-N-acetyl-alpha-D-glucosamine = UDP-N-acetyl-3-O-(1-carboxyvinyl)-alpha-D-glucosamine + phosphate. It functions in the pathway cell wall biogenesis; peptidoglycan biosynthesis. In terms of biological role, cell wall formation. Adds enolpyruvyl to UDP-N-acetylglucosamine. The polypeptide is UDP-N-acetylglucosamine 1-carboxyvinyltransferase 1 (Latilactobacillus sakei subsp. sakei (strain 23K) (Lactobacillus sakei subsp. sakei)).